A 336-amino-acid chain; its full sequence is Aldehyde reductase AdhA (336 aa).

Zn(2+) is bound by residues Cys36, Cys39, His61, Cys92, Cys95, Cys98, Cys106, and Cys148.

Belongs to the zinc-containing alcohol dehydrogenase family. In terms of assembly, homotetramer. Zn(2+) is required as a cofactor.

The protein localises to the cytoplasm. It carries out the reaction a primary alcohol + NADP(+) = an aldehyde + NADPH + H(+). Functionally, active on a wide variety of primary alcohols and their corresponding aldehydes, but not against ketones nor secondary alcohols. Active on aliphatic compounds up to 5 carbons in length and aromatic alcohols, less effective on branched-chain primary alcohols. Prefers NADPH to NADH. Its catalytic efficiency is greatest for aldehydes, suggesting the reduction of aromatic and medium-chain aliphatic aldehydes is its in vivo activity. Plays a role in tolerance to internally produced ethanol. The polypeptide is Aldehyde reductase AdhA (Synechocystis sp. (strain ATCC 27184 / PCC 6803 / Kazusa)).